Here is a 438-residue protein sequence, read N- to C-terminus: Xylose isomerase (438 aa).

Catalysis depends on residues H103 and D106. Mg(2+)-binding residues include E234, E270, H273, D298, D309, D311, and D341.

The protein belongs to the xylose isomerase family. As to quaternary structure, homotetramer. Mg(2+) serves as cofactor.

The protein resides in the cytoplasm. The enzyme catalyses alpha-D-xylose = alpha-D-xylulofuranose. The sequence is that of Xylose isomerase from Phocaeicola vulgatus (strain ATCC 8482 / DSM 1447 / JCM 5826 / CCUG 4940 / NBRC 14291 / NCTC 11154) (Bacteroides vulgatus).